A 304-amino-acid polypeptide reads, in one-letter code: Protein transport protein sec13 (304 aa).

WD repeat units follow at residues 12-51 (GHDD…QRLV), 56-97 (GHDG…WQRI), 102-143 (LHKA…WEHN), 147-203 (AHGL…NGYK), 211-253 (GHTD…PGEW), and 259-298 (NFDA…EWEN).

It belongs to the WD repeat SEC13 family. In terms of assembly, the COPII coat is composed of at least 5 proteins: the sec23/24 complex, the sec13/31 complex, and the protein vtr-7/sar1. Component of the nuclear pore complex (NPC). NPC constitutes the exclusive means of nucleocytoplasmic transport. NPCs allow the passive diffusion of ions and small molecules and the active, nuclear transport receptor-mediated bidirectional transport of macromolecules such as proteins, RNAs, ribonucleoparticles (RNPs), and ribosomal subunits across the nuclear envelope. Due to its 8-fold rotational symmetry, all subunits are present with 8 copies or multiples thereof.

It is found in the cytoplasmic vesicle. The protein resides in the COPII-coated vesicle membrane. It localises to the endoplasmic reticulum membrane. The protein localises to the nucleus. Its subcellular location is the nuclear pore complex. Component of the coat protein complex II (COPII) which promotes the formation of transport vesicles from the endoplasmic reticulum (ER). The coat has two main functions, the physical deformation of the endoplasmic reticulum membrane into vesicles and the selection of cargo molecules. It also functions as a component of the nuclear pore complex (NPC). NPC components, collectively referred to as nucleoporins (NUPs), can play the role of both NPC structural components and of docking or interaction partners for transiently associated nuclear transport factors. Nup-20/sec13 is required for efficient mRNA export from the nucleus to the cytoplasm and for correct nuclear pore biogenesis and distribution. This Neurospora crassa (strain ATCC 24698 / 74-OR23-1A / CBS 708.71 / DSM 1257 / FGSC 987) protein is Protein transport protein sec13 (nup-20).